The sequence spans 296 residues: Lipoyl synthase (296 aa).

[4Fe-4S] cluster-binding residues include Cys-34, Cys-39, Cys-45, Cys-60, Cys-64, Cys-67, and Ser-276. The Radical SAM core domain occupies 46–265 (WGEGTATFMI…GEVALSMGFK (220 aa)).

Belongs to the radical SAM superfamily. Lipoyl synthase family. It depends on [4Fe-4S] cluster as a cofactor.

It is found in the cytoplasm. It catalyses the reaction [[Fe-S] cluster scaffold protein carrying a second [4Fe-4S](2+) cluster] + N(6)-octanoyl-L-lysyl-[protein] + 2 oxidized [2Fe-2S]-[ferredoxin] + 2 S-adenosyl-L-methionine + 4 H(+) = [[Fe-S] cluster scaffold protein] + N(6)-[(R)-dihydrolipoyl]-L-lysyl-[protein] + 4 Fe(3+) + 2 hydrogen sulfide + 2 5'-deoxyadenosine + 2 L-methionine + 2 reduced [2Fe-2S]-[ferredoxin]. It functions in the pathway protein modification; protein lipoylation via endogenous pathway; protein N(6)-(lipoyl)lysine from octanoyl-[acyl-carrier-protein]: step 2/2. Functionally, catalyzes the radical-mediated insertion of two sulfur atoms into the C-6 and C-8 positions of the octanoyl moiety bound to the lipoyl domains of lipoate-dependent enzymes, thereby converting the octanoylated domains into lipoylated derivatives. This chain is Lipoyl synthase, found in Pyrobaculum arsenaticum (strain DSM 13514 / JCM 11321 / PZ6).